The sequence spans 418 residues: NADH-quinone oxidoreductase subunit D (418 aa).

The protein belongs to the complex I 49 kDa subunit family. As to quaternary structure, NDH-1 is composed of 14 different subunits. Subunits NuoB, C, D, E, F, and G constitute the peripheral sector of the complex.

It is found in the cell inner membrane. It carries out the reaction a quinone + NADH + 5 H(+)(in) = a quinol + NAD(+) + 4 H(+)(out). NDH-1 shuttles electrons from NADH, via FMN and iron-sulfur (Fe-S) centers, to quinones in the respiratory chain. The immediate electron acceptor for the enzyme in this species is believed to be ubiquinone. Couples the redox reaction to proton translocation (for every two electrons transferred, four hydrogen ions are translocated across the cytoplasmic membrane), and thus conserves the redox energy in a proton gradient. In Neisseria meningitidis serogroup C / serotype 2a (strain ATCC 700532 / DSM 15464 / FAM18), this protein is NADH-quinone oxidoreductase subunit D.